The chain runs to 382 residues: uncharacterized protein (382 aa).

A PE domain is found at 1-92 (MQFLSVIPEQ…GATAYRNTEF (92 aa)). Transmembrane regions (helical) follow at residues 23–43 (SALS…VSAA), 155–175 (AAVA…NGVV), 203–223 (FIVA…AVVG), 230–250 (TFLT…LAGV), 261–281 (LASG…VQLF), 284–304 (AFLL…IAVV), 315–335 (LVVP…AQFA), and 347–367 (LGAP…QGIG).

This sequence belongs to the mycobacterial PE family.

The protein resides in the cell membrane. This is an uncharacterized protein from Mycobacterium bovis (strain ATCC BAA-935 / AF2122/97).